Reading from the N-terminus, the 491-residue chain is 23S rRNA (uracil(1939)-C(5))-methyltransferase RlmD (491 aa).

The span at 1–10 shows a compositional bias: basic and acidic residues; the sequence is MSDPTEHPEI. Residues 1 to 28 are disordered; it reads MSDPTEHPEILQDPSSSAPVQGRTDLPP. The TRAM domain occupies 18 to 81; it reads APVQGRTDLP…NNWEQASLTA (64 aa). 4 residues coordinate [4Fe-4S] cluster: Cys94, Cys104, Cys107, and Cys186. Residues Gln294, Phe323, Asn328, Glu344, Asn379, and Asp400 each coordinate S-adenosyl-L-methionine. Cys447 acts as the Nucleophile in catalysis.

It belongs to the class I-like SAM-binding methyltransferase superfamily. RNA M5U methyltransferase family. RlmD subfamily.

It carries out the reaction uridine(1939) in 23S rRNA + S-adenosyl-L-methionine = 5-methyluridine(1939) in 23S rRNA + S-adenosyl-L-homocysteine + H(+). Catalyzes the formation of 5-methyl-uridine at position 1939 (m5U1939) in 23S rRNA. The sequence is that of 23S rRNA (uracil(1939)-C(5))-methyltransferase RlmD from Paracidovorax citrulli (strain AAC00-1) (Acidovorax citrulli).